A 218-amino-acid chain; its full sequence is uncharacterized protein (218 aa).

4 consecutive transmembrane segments (helical) span residues isoleucine 10 to isoleucine 30, isoleucine 55 to isoleucine 75, valine 147 to alanine 167, and phenylalanine 175 to arginine 195.

It belongs to the DedA family.

The protein localises to the cell membrane. This is an uncharacterized protein from Mycobacterium tuberculosis (strain CDC 1551 / Oshkosh).